Here is a 301-residue protein sequence, read N- to C-terminus: Homoserine kinase (301 aa).

89 to 99 serves as a coordination point for ATP; the sequence is KPGSGLGSSSA.

It belongs to the GHMP kinase family. Homoserine kinase subfamily.

Its subcellular location is the cytoplasm. It carries out the reaction L-homoserine + ATP = O-phospho-L-homoserine + ADP + H(+). It participates in amino-acid biosynthesis; L-threonine biosynthesis; L-threonine from L-aspartate: step 4/5. Its function is as follows. Catalyzes the ATP-dependent phosphorylation of L-homoserine to L-homoserine phosphate. This is Homoserine kinase from Methanococcus maripaludis (strain C5 / ATCC BAA-1333).